Here is a 129-residue protein sequence, read N- to C-terminus: Succinate dehydrogenase subunit 3-1, mitochondrial (129 aa).

The N-terminal 58 residues, 1–58, are a transit peptide targeting the mitochondrion; the sequence is MEKYHSNSRFAPFRDAPFALRGALGSSGSSFSSIDSLRRSSTLEQARGYTSRPLGAVR. Residues 25–35 show a composition bias toward low complexity; the sequence is GSSGSSFSSID. Positions 25–80 are disordered; that stretch reads GSSGSSFSSIDSLRRSSTLEQARGYTSRPLGAVRPKMLPSGCRPLHTSHPLSAPVA. His87 provides a ligand contact to heme. A helical transmembrane segment spans residues 105–127; that stretch reads IFGAALGAAIISIPLATKFSLMF.

In terms of assembly, component of complex II composed of eight subunits in plants: four classical SDH subunits SDH1, SDH2, SDH3 and SDH4 (a flavoprotein (FP), an iron-sulfur protein (IP), and a cytochrome b composed of a large and a small subunit.), as well as four subunits unknown in mitochondria from bacteria and heterotrophic eukaryotes. It depends on heme as a cofactor.

Its subcellular location is the mitochondrion inner membrane. It functions in the pathway carbohydrate metabolism; tricarboxylic acid cycle. In terms of biological role, membrane-anchoring subunit of succinate dehydrogenase (SDH). The polypeptide is Succinate dehydrogenase subunit 3-1, mitochondrial (Oryza sativa subsp. japonica (Rice)).